We begin with the raw amino-acid sequence, 1442 residues long: DNA polymerase III PolC-type (1442 aa).

An Exonuclease domain is found at 409–568; sequence YVIFDIETTG…YDAIVLADVF (160 aa).

It belongs to the DNA polymerase type-C family. PolC subfamily.

It is found in the cytoplasm. It carries out the reaction DNA(n) + a 2'-deoxyribonucleoside 5'-triphosphate = DNA(n+1) + diphosphate. Functionally, required for replicative DNA synthesis. This DNA polymerase also exhibits 3' to 5' exonuclease activity. The chain is DNA polymerase III PolC-type from Ureaplasma parvum serovar 3 (strain ATCC 700970).